The following is a 288-amino-acid chain: Heme oxygenase 1 (288 aa).

Residues Met1–Ala265 lie on the Cytoplasmic side of the membrane. Heme b is bound by residues Lys18, His25, Tyr134, and Arg183. The interval His223–Asn260 is disordered. Position 229 is a phosphoserine (Ser229). A helical; Anchor for type IV membrane protein membrane pass occupies residues Pro266 to Met288.

Belongs to the heme oxygenase family. In terms of assembly, (Microbial infection) Interacts with SARS-CoV-2 ORF3A protein; the interaction promotes ORF3A-induced autophagy but is unlikely to be involved in ORF3A-mediated induction of reticulophagy. As to quaternary structure, homodimer and higher order homooligomer. Oligomerization is crucial for its stability and function in the endoplasmic reticulum. Interacts with FLVCR2; this interaction is potentiated in the presence of heme. A soluble form arises by proteolytic removal of the membrane anchor. In terms of tissue distribution, expressed at higher levels in renal cancer tissue than in normal tissue (at protein level).

It localises to the endoplasmic reticulum membrane. The catalysed reaction is heme b + 3 reduced [NADPH--hemoprotein reductase] + 3 O2 = biliverdin IXalpha + CO + Fe(2+) + 3 oxidized [NADPH--hemoprotein reductase] + 3 H2O + H(+). Functionally, catalyzes the oxidative cleavage of heme at the alpha-methene bridge carbon, released as carbon monoxide (CO), to generate biliverdin IXalpha, while releasing the central heme iron chelate as ferrous iron. Affords protection against programmed cell death and this cytoprotective effect relies on its ability to catabolize free heme and prevent it from sensitizing cells to undergo apoptosis. In terms of biological role, (Microbial infection) During SARS-COV-2 infection, promotes SARS-CoV-2 ORF3A-mediated autophagy but is unlikely to be required for ORF3A-mediated induction of reticulophagy. Catalyzes the oxidative cleavage of heme at the alpha-methene bridge carbon, released as carbon monoxide (CO), to generate biliverdin IXalpha, while releasing the central heme iron chelate as ferrous iron. The chain is Heme oxygenase 1 (HMOX1) from Homo sapiens (Human).